The primary structure comprises 151 residues: Ribosome maturation factor RimP (151 aa).

Belongs to the RimP family.

It localises to the cytoplasm. Functionally, required for maturation of 30S ribosomal subunits. This chain is Ribosome maturation factor RimP, found in Pseudoalteromonas translucida (strain TAC 125).